A 650-amino-acid polypeptide reads, in one-letter code: Chaperone protein HtpG (650 aa).

The interval 1–356 is a; substrate-binding; that stretch reads MSTRVETLEF…THDLSLNISR (356 aa). Residues 222-245 are disordered; the sequence is AKDRDSNDDGTAESGAGAENAGDR. The tract at residues 357-572 is b; the sequence is EILQQDRRIQ…TFDMTPALEK (216 aa). The tract at residues 573–650 is c; that stretch reads MYRAMGHEMP…LLAERLAEAL (78 aa).

The protein belongs to the heat shock protein 90 family. As to quaternary structure, homodimer.

The protein localises to the cytoplasm. Its function is as follows. Molecular chaperone. Has ATPase activity. This Frankia casuarinae (strain DSM 45818 / CECT 9043 / HFP020203 / CcI3) protein is Chaperone protein HtpG.